The sequence spans 631 residues: uncharacterized protein (631 aa).

The span at 1 to 19 (MSKMGSSSMGELQDGITQE) shows a compositional bias: polar residues. A disordered region spans residues 1-92 (MSKMGSSSMG…EENYPRLQTT (92 aa)). Basic residues predominate over residues 67–76 (KKKKKKKLKK). The 150-residue stretch at 277 to 426 (LAIDCEMVRT…EDALACVDLL (150 aa)) folds into the Exonuclease domain. Residues 517–526 (ANRNTKQENN) are compositionally biased toward polar residues. A disordered region spans residues 517–540 (ANRNTKQENNSDTDTENDSVEEDQ). A compositionally biased stretch (acidic residues) spans 527–540 (SDTDTENDSVEEDQ).

The protein belongs to the REXO1/REXO3 family.

The protein resides in the nucleus. This is an uncharacterized protein from Schizosaccharomyces pombe (strain 972 / ATCC 24843) (Fission yeast).